The sequence spans 519 residues: Seed lectin (519 aa).

2 cysteine pairs are disulfide-bonded: Cys249-Cys258 and Cys274-Cys293. Ricin B-type lectin domains lie at 261-387 (ETRT…WRVG) and 390-518 (VQPI…WVLF). The stretch at 271–311 (DALCVDVAGALTSDGSRLILYPCGQQVNQKWTFHSDGTVRS) is one 1-alpha repeat. Residues 276 to 279 (DVAG) and 296 to 298 (QVN) each bind a carbohydrate. Residues 312 to 352 (LGKCLATNNSKFGNLVVIYDCSKLAAEDISWDVSVGGTIMN) form a 1-beta repeat. A disulfide bridge connects residues Cys315 and Cys332. Residues 356–388 (EDLALTSNKATRSTNLTMEVNTYSASQGWRVGN) form a 1-gamma repeat. Residue Asn370 is glycosylated (N-linked (GlcNAc...) asparagine). The stretch at 401-438 (DDMCLEATDGNTNMWLEECVPNQREQSWALYSDGTIRV) is one 2-alpha repeat. Cystine bridges form between Cys404–Cys419 and Cys445–Cys464. A 2-beta repeat occupies 442-482 (RELCVTASSSTYDNWKVITILNCDGSNNQRWVFLADGSIST). A carbohydrate contacts are provided by residues Asp454, 491-494 (DVAR), 505-508 (HRPH), and Asn512. Residues 486–513 (QRLAMDVARSDVDLKKIILHRPHGDLNQ) form a 2-gamma repeat.

In the N-terminal section; belongs to the ribosome-inactivating protein family. Type 2 RIP subfamily. In terms of assembly, heterotrimer consisting of Aalpha, Abeta and B chains with Abeta and B being disulfide-linked.

Functionally, seed lectin similar to type 2 ribosome-inactivating proteins. The Aalpha and Abeta chains constitute the rRNA glycosidase domain and the B chain the carbohydrate-binding lectin domain. Is predicted to have no glycosidase activity and, hence, to be non-toxic, due to small changes in both the nucleotide binding and carbohydrate binding capabilities. Binds galactose and derivatives with a preference for the beta-anomeric forms. Binds prophyrins. Has hemagglutinating activity towards rabbit and human erythrocytes. The protein is Seed lectin of Trichosanthes anguina (Snake gourd).